The sequence spans 419 residues: L-rhamnose isomerase (419 aa).

Residues His262, Asp294, and Asp296 each contribute to the Mn(2+) site.

Belongs to the rhamnose isomerase family. In terms of assembly, homotetramer. Requires Mn(2+) as cofactor.

The protein localises to the cytoplasm. It catalyses the reaction L-rhamnopyranose = L-rhamnulose. It participates in carbohydrate degradation; L-rhamnose degradation; glycerone phosphate from L-rhamnose: step 1/3. Its function is as follows. Catalyzes the interconversion of L-rhamnose and L-rhamnulose. This chain is L-rhamnose isomerase, found in Salmonella choleraesuis (strain SC-B67).